Here is a 145-residue protein sequence, read N- to C-terminus: Superoxide dismutase [Mn/Fe] (145 aa).

2 residues coordinate Fe(3+): His-10 and His-64. Residues His-10 and His-64 each coordinate Mn(2+).

Belongs to the iron/manganese superoxide dismutase family. Mn(2+) is required as a cofactor. Fe(3+) serves as cofactor.

The catalysed reaction is 2 superoxide + 2 H(+) = H2O2 + O2. Destroys superoxide anion radicals which are normally produced within the cells and which are toxic to biological systems. Catalyzes the dismutation of superoxide anion radicals into O2 and H2O2 by successive reduction and oxidation of the transition metal ion at the active site. This is Superoxide dismutase [Mn/Fe] (sodA) from Streptococcus salivarius.